Consider the following 219-residue polypeptide: Elongation factor Ts (219 aa).

Positions 81 to 84 are involved in Mg(2+) ion dislocation from EF-Tu; sequence SDFV.

Belongs to the EF-Ts family.

The protein resides in the cytoplasm. Associates with the EF-Tu.GDP complex and induces the exchange of GDP to GTP. It remains bound to the aminoacyl-tRNA.EF-Tu.GTP complex up to the GTP hydrolysis stage on the ribosome. The polypeptide is Elongation factor Ts (Koribacter versatilis (strain Ellin345)).